The following is a 547-amino-acid chain: Cytochrome P450 monooxygenase cpsD (547 aa).

A helical transmembrane segment spans residues 18 to 38; sequence LTGAALVVTLITSVIIVAADL. Cysteine 476 contributes to the heme binding site. The tract at residues 528 to 547 is disordered; the sequence is RRRDARRTHEALGSKLKPEE. Positions 534–547 are enriched in basic and acidic residues; that stretch reads RTHEALGSKLKPEE.

This sequence belongs to the cytochrome P450 family. Heme is required as a cofactor.

Its subcellular location is the membrane. The catalysed reaction is campesine B + campesine C + reduced [NADPH--hemoprotein reductase] + O2 = campesine D + oxidized [NADPH--hemoprotein reductase] + 2 H2O + 2 H(+). It carries out the reaction 2 campesine B + reduced [NADPH--hemoprotein reductase] + O2 = campesine F + oxidized [NADPH--hemoprotein reductase] + 2 H2O + H(+). The enzyme catalyses campesine C + campesine A + reduced [NADPH--hemoprotein reductase] + O2 = campesine E + oxidized [NADPH--hemoprotein reductase] + 2 H2O + 2 H(+). The protein operates within alkaloid biosynthesis. Functionally, cytochrome P450 monooxygenase; part of the gene cluster that mediates the biosynthesis of campesine G, a dimeric indole piperazine alkaloid that shows good insecticidal activity Galleria mellonella. Within the pathway, cpsD acts as a dimerase that simultaneously catalyzes one C-C bond (C3-C3') and two C-N bonds (C2-N16' and C2'-N16) coupling reactions between campesines B and C to produce a heterodimer with unexpected 6/5/6/6/6/6/5/6 eight-ring scaffold called campesine D. CpsD is also able to catalyze oxidative heterocoupling od campesines A with B to produce campesine F and campesines A with C to produce campesine E. The non-canonical non-ribosomal peptide synthetase cpsA catalyzes the first steps of the pathway by producing L-tryptophanal and L-valinal from their respective amino-acids. These products condensate spontaneously to form trypyl-valyl pyrazine also known as didehydrocampesine A. The NmrA-like family domain-containing oxidoreductase cpsB is the next enzyme in cps pathway and reduces the unstable didehydrocampesine A to campesine A. The methyltransferase cpsF and the acetyltransferase cpsE both recognize N13 of piperazine ring to carry out methylation and acetylation of campesine A to produce campesine C and B, respectively. The cytochrome P450 monooxygenase cpsD then acts as a dimerase that catalyzes oxidative heterocoupling between campesine B and C to produce heterodimers with unexpected 6/5/6/6/6/6/5/6 eight-ring scaffold called campesine D. Finally,the cytochrome P450 monooxygenase cpsC is a regioselective dehydrogenase that catalyzes dehydrogenation reaction towards C2-N1 to produce campesine G. The chain is Cytochrome P450 monooxygenase cpsD from Aspergillus campestris (strain IBT 28561).